The primary structure comprises 1900 residues: Phosphatidylinositol 4-kinase STT4 (1900 aa).

Serine 459 is modified (phosphoserine). The PIK helical domain occupies lysine 1345–arginine 1530. The tract at residues methionine 1531–valine 1648 is pleckstrin homology (PH) domain conferring phosphoinositide binding specificity. The region spanning phenylalanine 1617–phenylalanine 1884 is the PI3K/PI4K catalytic domain. The segment at isoleucine 1623 to aspartate 1629 is G-loop. Residues glutamine 1751–asparagine 1759 are catalytic loop. The interval histidine 1770–threonine 1794 is activation loop.

Belongs to the PI3/PI4-kinase family. Type III PI4K subfamily.

It catalyses the reaction a 1,2-diacyl-sn-glycero-3-phospho-(1D-myo-inositol) + ATP = a 1,2-diacyl-sn-glycero-3-phospho-(1D-myo-inositol 4-phosphate) + ADP + H(+). Functionally, acts on phosphatidylinositol (PI) in the first committed step in the production of the second messenger inositol 1,4,5,-trisphosphate. STT4 functions in PKC1 protein kinase pathway. The protein is Phosphatidylinositol 4-kinase STT4 (STT4) of Saccharomyces cerevisiae (strain ATCC 204508 / S288c) (Baker's yeast).